The chain runs to 144 residues: MPFGEYQYSLDDKGRVVIPAPFRDFVEDGLVLTRGMEGCLYVFPLDRWKKIEEQLVNLPLTDAEARAFVRFFYSGAHKTRMDSASRVLIPPPLRLFAGLKEGGEVVIAGAPGRLEIWSQERWWKAIEEVLAKPPAPEALKGLVG.

SpoVT-AbrB domains lie at 5-47 (EYQY…PLDR) and 76-121 (AHKT…SQER).

It belongs to the MraZ family. As to quaternary structure, forms oligomers.

It is found in the cytoplasm. It localises to the nucleoid. This is Transcriptional regulator MraZ from Thermus thermophilus (strain ATCC BAA-163 / DSM 7039 / HB27).